Here is a 213-residue protein sequence, read N- to C-terminus: MNWLEERLPGIGKVAEDIAEHPVPSHTLNIFYCLGGLTLLAFLVQCVTGLFLALYYKPTPEAAFASVQMITNEVRFGATIRSLHHWAANLMILLVFLHMLRVYYTGSFKKPRELNWLAGCFLLVLSLGLAFTGYLLPYEQLSYWASVIGAETAGSLPVVGATMKIMMQGGIKVTAEMLSRFYVLHVMILPLVTIGFLVAHFIMIRVQGISDPM.

A helical transmembrane segment spans residues 30 to 50 (IFYCLGGLTLLAFLVQCVTGL). Residue Cys-33 participates in heme c binding. Heme b is bound by residues His-84 and His-98. A run of 3 helical transmembrane segments spans residues 88–108 (ANLM…TGSF), 114–134 (LNWL…FTGY), and 184–204 (LHVM…FIMI). Residues His-185 and His-200 each contribute to the heme b site.

This sequence belongs to the cytochrome b family. PetB subfamily. In terms of assembly, the subunits of the cytochrome bc complex are a Rieske Fe-S protein (PetC), cytochrome b6 (PetB), subunit IV (PetD), and a diheme cytochrome c (PetX). The cofactor is heme b. Requires heme c as cofactor.

It is found in the cell membrane. Its function is as follows. Component of the cytochrome bc complex which donates electrons to the photosynthetic reaction center. The chain is Cytochrome b6 from Heliobacterium mobile (Heliobacillus mobilis).